The sequence spans 126 residues: Small ribosomal subunit protein bS6 (126 aa).

The interval 104–126 (QGAEKGKSSSKKVAAEAEASEEA) is disordered.

This sequence belongs to the bacterial ribosomal protein bS6 family.

Functionally, binds together with bS18 to 16S ribosomal RNA. The sequence is that of Small ribosomal subunit protein bS6 from Coxiella burnetii (strain Dugway 5J108-111).